Reading from the N-terminus, the 725-residue chain is Polyribonucleotide nucleotidyltransferase (725 aa).

Residues D506 and D512 each coordinate Mg(2+). Residues P571 to I631 form the KH domain. In terms of domain architecture, S1 motif spans D657–A724.

This sequence belongs to the polyribonucleotide nucleotidyltransferase family. Mg(2+) serves as cofactor.

Its subcellular location is the cytoplasm. It catalyses the reaction RNA(n+1) + phosphate = RNA(n) + a ribonucleoside 5'-diphosphate. Functionally, involved in mRNA degradation. Catalyzes the phosphorolysis of single-stranded polyribonucleotides processively in the 3'- to 5'-direction. This is Polyribonucleotide nucleotidyltransferase from Aliarcobacter butzleri (strain RM4018) (Arcobacter butzleri).